The primary structure comprises 264 residues: Teichoic acids export ATP-binding protein TagH (264 aa).

An ABC transporter domain is found at 5 to 243 (VNIKNVTKEY…YEAFLNDFKK (239 aa)). 57–64 (GINGSGKS) is an ATP binding site.

This sequence belongs to the ABC transporter superfamily. Teichoic acids exporter (TC 3.A.1.104.1) family. In terms of assembly, the complex is composed of two ATP-binding proteins (TagH) and two transmembrane proteins (TagG).

The protein resides in the cell membrane. The catalysed reaction is ATP + H2O + teichoic acidSide 1 = ADP + phosphate + teichoic acidSide 2.. Part of the ABC transporter complex TagGH involved in teichoic acids export. Responsible for energy coupling to the transport system. This is Teichoic acids export ATP-binding protein TagH from Staphylococcus aureus (strain USA300).